We begin with the raw amino-acid sequence, 247 residues long: Trypsin (247 aa).

The signal sequence occupies residues 1–21 (LTTVISYFALVAFALVGVSYA). Residues 22-30 (TPKASINGR) constitute a propeptide, activation peptide. The Peptidase S1 domain occupies 31–247 (IVGGEMTDIS…QSNFPGVYGI (217 aa)). Cysteines 61 and 77 form a disulfide. Active-site charge relay system residues include histidine 76 and aspartate 120. 2 disulfides stabilise this stretch: cysteine 185/cysteine 201 and cysteine 212/cysteine 236. Serine 216 (charge relay system) is an active-site residue.

This sequence belongs to the peptidase S1 family. In terms of tissue distribution, midgut.

The protein resides in the secreted. The protein localises to the extracellular space. It catalyses the reaction Preferential cleavage: Arg-|-Xaa, Lys-|-Xaa.. The chain is Trypsin from Simulium vittatum (Striped black fly).